The chain runs to 293 residues: tRNA(His) guanylyltransferase (293 aa).

Positions 29, 30, and 76 each coordinate Mg(2+). Residues D29–T34 and S75–D76 each bind GTP. The tract at residues K226–K252 is disordered.

The protein belongs to the tRNA(His) guanylyltransferase family. Requires Mg(2+) as cofactor.

It catalyses the reaction a 5'-end ribonucleotide-tRNA(His) + GTP + ATP + H2O = a 5'-end phospho-guanosine-ribonucleotide-tRNA(His) + AMP + 2 diphosphate + H(+). Functionally, adds a GMP to the 5'-end of tRNA(His) after transcription and RNase P cleavage. In Neurospora crassa (strain ATCC 24698 / 74-OR23-1A / CBS 708.71 / DSM 1257 / FGSC 987), this protein is tRNA(His) guanylyltransferase (rgt-1).